The following is a 568-amino-acid chain: Phosphoribosylaminoimidazole carboxylase (568 aa).

Residues 110–298 (KNHLIKHDVA…QFEAHVRAVT (189 aa)) enclose the ATP-grasp domain. 138 to 193 (GEKFGYPYMLKSRTLAYDGRGNFVVKDKSYCEKALEFLKDRPLYAEKWCPFTKELA) serves as a coordination point for ATP.

The protein in the C-terminal section; belongs to the AIR carboxylase family. Class I subfamily.

It catalyses the reaction 5-amino-1-(5-phospho-D-ribosyl)imidazole-4-carboxylate + H(+) = 5-amino-1-(5-phospho-beta-D-ribosyl)imidazole + CO2. Its pathway is purine metabolism; IMP biosynthesis via de novo pathway; 5-amino-1-(5-phospho-D-ribosyl)imidazole-4-carboxylate from 5-amino-1-(5-phospho-D-ribosyl)imidazole (carboxylase route): step 1/1. The polypeptide is Phosphoribosylaminoimidazole carboxylase (ADE2) (Candida albicans (strain SC5314 / ATCC MYA-2876) (Yeast)).